The primary structure comprises 1032 residues: Phosphoenolpyruvate carboxylase 4 (1032 aa).

His154 is a catalytic residue. The tract at residues Pro377–Gly407 is disordered. Positions Gly398 to Gly407 are enriched in polar residues. The active site involves Lys699.

Belongs to the PEPCase type 1 family. Homotetramer. Mg(2+) is required as a cofactor. In terms of tissue distribution, expressed at low levels in flowers and siliques, and detectable in roots.

The protein resides in the cytoplasm. It catalyses the reaction oxaloacetate + phosphate = phosphoenolpyruvate + hydrogencarbonate. Through the carboxylation of phosphoenolpyruvate (PEP) it forms oxaloacetate, a four-carbon dicarboxylic acid source for the tricarboxylic acid cycle. The sequence is that of Phosphoenolpyruvate carboxylase 4 (PPC4) from Arabidopsis thaliana (Mouse-ear cress).